The sequence spans 394 residues: Elongation factor Tu (394 aa).

Residues 10-204 (KPHVNVGTIG…ALDSYIPEPQ (195 aa)) enclose the tr-type G domain. The interval 19-26 (GHVDHGKT) is G1. 19 to 26 (GHVDHGKT) is a GTP binding site. Thr26 contacts Mg(2+). Positions 60–64 (GITIN) are G2. The segment at 81–84 (DCPG) is G3. GTP-binding positions include 81 to 85 (DCPGH) and 136 to 139 (NKCD). The G4 stretch occupies residues 136–139 (NKCD). The G5 stretch occupies residues 174–176 (SAL).

The protein belongs to the TRAFAC class translation factor GTPase superfamily. Classic translation factor GTPase family. EF-Tu/EF-1A subfamily. In terms of assembly, monomer.

It is found in the cytoplasm. The catalysed reaction is GTP + H2O = GDP + phosphate + H(+). Its function is as follows. GTP hydrolase that promotes the GTP-dependent binding of aminoacyl-tRNA to the A-site of ribosomes during protein biosynthesis. This is Elongation factor Tu from Shewanella putrefaciens (Pseudomonas putrefaciens).